The primary structure comprises 254 residues: Ribosomal RNA small subunit methyltransferase J (254 aa).

S-adenosyl-L-methionine contacts are provided by residues 106 to 107 (RD) and D177.

This sequence belongs to the methyltransferase superfamily. RsmJ family.

Its subcellular location is the cytoplasm. It carries out the reaction guanosine(1516) in 16S rRNA + S-adenosyl-L-methionine = N(2)-methylguanosine(1516) in 16S rRNA + S-adenosyl-L-homocysteine + H(+). Its function is as follows. Specifically methylates the guanosine in position 1516 of 16S rRNA. This is Ribosomal RNA small subunit methyltransferase J from Nitrosococcus oceani (strain ATCC 19707 / BCRC 17464 / JCM 30415 / NCIMB 11848 / C-107).